The primary structure comprises 258 residues: Type III pantothenate kinase (258 aa).

6-13 (DVGNTNTV) is an ATP binding site. Residues Tyr100 and 107 to 110 (GADR) contribute to the substrate site. The Proton acceptor role is filled by Asp109. A K(+)-binding site is contributed by Asp129. Thr132 provides a ligand contact to ATP. Thr184 is a substrate binding site.

It belongs to the type III pantothenate kinase family. Homodimer. NH4(+) serves as cofactor. Requires K(+) as cofactor.

Its subcellular location is the cytoplasm. The catalysed reaction is (R)-pantothenate + ATP = (R)-4'-phosphopantothenate + ADP + H(+). It functions in the pathway cofactor biosynthesis; coenzyme A biosynthesis; CoA from (R)-pantothenate: step 1/5. Not regulated by feedback inhibition by CoA and its thioesters as described for many other pantothenate kinases. Not inhibited by N-pentylpantothenamide (N5-Pan), and this compound cannot act as a substrate either. Functionally, catalyzes the phosphorylation of pantothenate (Pan), the first step in CoA biosynthesis. Cannot utilize a phosphoryl donor other than ATP. The chain is Type III pantothenate kinase (coaX) from Bacillus subtilis (strain 168).